Reading from the N-terminus, the 226-residue chain is Ribonuclease HII (226 aa).

Residues Gln24–Val216 enclose the RNase H type-2 domain. A divalent metal cation is bound by residues Asp30, Glu31, and Asp125.

It belongs to the RNase HII family. The cofactor is Mn(2+). Requires Mg(2+) as cofactor.

It is found in the cytoplasm. The catalysed reaction is Endonucleolytic cleavage to 5'-phosphomonoester.. In terms of biological role, endonuclease that specifically degrades the RNA of RNA-DNA hybrids. This Cupriavidus metallidurans (strain ATCC 43123 / DSM 2839 / NBRC 102507 / CH34) (Ralstonia metallidurans) protein is Ribonuclease HII.